We begin with the raw amino-acid sequence, 272 residues long: R3H domain-containing protein 4 (272 aa).

The interval 141–167 (LEDEGKSKARRRGPTRGEDRRREDPAY) is disordered. The span at 155 to 165 (TRGEDRRREDP) shows a compositional bias: basic and acidic residues. Positions 191-254 (METLETWEER…KRQMKVSNRH (64 aa)) constitute an R3H domain.

The protein localises to the nucleus. This is R3H domain-containing protein 4 (R3HDM4) from Bos taurus (Bovine).